Here is a 277-residue protein sequence, read N- to C-terminus: 2-dehydro-3-deoxyphosphooctonate aldolase (277 aa).

It belongs to the KdsA family.

It is found in the cytoplasm. The catalysed reaction is D-arabinose 5-phosphate + phosphoenolpyruvate + H2O = 3-deoxy-alpha-D-manno-2-octulosonate-8-phosphate + phosphate. It participates in carbohydrate biosynthesis; 3-deoxy-D-manno-octulosonate biosynthesis; 3-deoxy-D-manno-octulosonate from D-ribulose 5-phosphate: step 2/3. Its pathway is bacterial outer membrane biogenesis; lipopolysaccharide biosynthesis. The polypeptide is 2-dehydro-3-deoxyphosphooctonate aldolase (Brucella melitensis biotype 2 (strain ATCC 23457)).